We begin with the raw amino-acid sequence, 318 residues long: Pseudouridine-5'-phosphate glycosidase 1 (318 aa).

Glutamate 29 (proton donor) is an active-site residue. Substrate-binding residues include lysine 90 and valine 110. Residue aspartate 142 coordinates Mn(2+). Serine 144 to aspartate 146 serves as a coordination point for substrate. The active-site Nucleophile is lysine 163.

This sequence belongs to the pseudouridine-5'-phosphate glycosidase family. In terms of assembly, homotrimer. It depends on Mn(2+) as a cofactor.

It carries out the reaction D-ribose 5-phosphate + uracil = psi-UMP + H2O. In terms of biological role, catalyzes the reversible cleavage of pseudouridine 5'-phosphate (PsiMP) to ribose 5-phosphate and uracil. Functions biologically in the cleavage direction, as part of a pseudouridine degradation pathway. In Photorhabdus laumondii subsp. laumondii (strain DSM 15139 / CIP 105565 / TT01) (Photorhabdus luminescens subsp. laumondii), this protein is Pseudouridine-5'-phosphate glycosidase 1.